The sequence spans 248 residues: 14-3-3 protein homolog 2 (248 aa).

It belongs to the 14-3-3 family.

This Echinococcus multilocularis (Fox tapeworm) protein is 14-3-3 protein homolog 2.